A 359-amino-acid polypeptide reads, in one-letter code: Probable mannitol dehydrogenase (359 aa).

Zn(2+) is bound by residues C50, H72, C103, C106, C109, C117, and C165.

Belongs to the zinc-containing alcohol dehydrogenase family. Zn(2+) is required as a cofactor.

It catalyses the reaction D-mannitol + NAD(+) = D-mannose + NADH + H(+). Oxidizes mannitol to mannose. Provides the initial step by which translocated mannitol is committed to central metabolism and, by regulating mannitol pool size, is important in regulating salt tolerance at the cellular level. This Medicago sativa (Alfalfa) protein is Probable mannitol dehydrogenase (CAD1).